The primary structure comprises 2224 residues: Multifunctional protein r (2224 aa).

The segment at 1-369 is GATase (Glutamine amidotransferase); that stretch reads MASTDCYLAL…PQDTEFLFDV (369 aa). The L-glutamine site is built by S55, G240, and G242. A Glutamine amidotransferase type-1 domain is found at 195 to 380; sequence RIAILDCGLK…MESIQQKDLT (186 aa). C269 functions as the Nucleophile; for GATase activity in the catalytic mechanism. Residues L270, Q273, N311, G313, and Y314 each contribute to the L-glutamine site. Catalysis depends on for GATase activity residues H353 and E355. A linker region spans residues 370 to 415; that stretch reads FMESIQQKDLTIPQLIEQRLRPTTPAIDSAPVMPRKVLILGSGGLS. The segment at 416–1470 is CPSase (Carbamoyl-phosphate synthase); the sequence is IGQAGEFDYS…KPPMKTHTDC (1055 aa). ATP is bound by residues R525, R565, G571, G572, K602, E609, G635, I636, H637, Q678, and E692. 2 consecutive ATP-grasp domains span residues 529-721 and 1066-1257; these read AERV…KLAL and SRML…RAIV. Residues Q678, E692, and N694 each coordinate Mg(2+). Mn(2+) is bound by residues Q678, E692, and N694. The ATP site is built by R1102, K1141, L1143, E1148, G1173, V1174, H1175, S1176, Q1216, and E1228. Mg(2+)-binding residues include Q1216, E1228, and N1230. Positions 1216, 1228, and 1230 each coordinate Mn(2+). Positions 1322–1477 constitute an MGS-like domain; the sequence is FQIPKNAVLL…TDCMTSRRIV (156 aa). A linker region spans residues 1471-1484; it reads MTSRRIVKLPGFID. Residues 1485 to 1800 form a DHOase (dihydroorotase) region; it reads VHVHLREPGA…GTKVKGRVHR (316 aa). Positions 1486 and 1488 each coordinate Zn(2+). (S)-dihydroorotate-binding residues include R1490 and N1520. Zn(2+) is bound by residues K1571, H1605, C1628, H1629, and E1652. Residue K1571 is modified to N6-carboxylysine. Residue R1676 coordinates (S)-dihydroorotate. A Zn(2+)-binding site is contributed by D1701. The active-site For DHOase activity is D1701. Residues H1705 and P1717 each contribute to the (S)-dihydroorotate site. The linker stretch occupies residues 1801-1912; sequence VVLRGEVAFV…QRTTNSNPVA (112 aa). The segment at 1821 to 1843 is disordered; it reads GQNVRPKQSPLASEASQDLLPSD. S1883, S1885, S1892, and S1894 each carry phosphoserine. Residues 1913-2224 form an ATCase (Aspartate transcarbamylase) region; it reads HSLMGKHILA…MVVGGRNTAL (312 aa). R1970 and T1971 together coordinate carbamoyl phosphate. Position 1998 (K1998) interacts with L-aspartate. Carbamoyl phosphate is bound by residues R2019, H2047, and Q2050. The L-aspartate site is built by R2080 and R2141. Residues L2180 and P2181 each coordinate carbamoyl phosphate.

The protein in the N-terminal section; belongs to the CarA family. In the 2nd section; belongs to the CarB family. It in the 3rd section; belongs to the metallo-dependent hydrolases superfamily. DHOase family. CAD subfamily. This sequence in the C-terminal section; belongs to the aspartate/ornithine carbamoyltransferase superfamily. ATCase family. The cofactor is Mg(2+). It depends on Mn(2+) as a cofactor. Requires Zn(2+) as cofactor.

Its subcellular location is the cytoplasm. It catalyses the reaction hydrogencarbonate + L-glutamine + 2 ATP + H2O = carbamoyl phosphate + L-glutamate + 2 ADP + phosphate + 2 H(+). It carries out the reaction L-glutamine + H2O = L-glutamate + NH4(+). The enzyme catalyses hydrogencarbonate + NH4(+) + 2 ATP = carbamoyl phosphate + 2 ADP + phosphate + 2 H(+). The catalysed reaction is carbamoyl phosphate + L-aspartate = N-carbamoyl-L-aspartate + phosphate + H(+). It catalyses the reaction (S)-dihydroorotate + H2O = N-carbamoyl-L-aspartate + H(+). It functions in the pathway pyrimidine metabolism; UMP biosynthesis via de novo pathway; (S)-dihydroorotate from bicarbonate: step 1/3. The protein operates within pyrimidine metabolism; UMP biosynthesis via de novo pathway; (S)-dihydroorotate from bicarbonate: step 2/3. Its pathway is pyrimidine metabolism; UMP biosynthesis via de novo pathway; (S)-dihydroorotate from bicarbonate: step 3/3. In terms of biological role, multifunctional protein that encodes the first 3 enzymatic activities of the de novo pyrimidine pathway: carbamoylphosphate synthetase (CPSase; EC 6.3.5.5), aspartate transcarbamylase (ATCase; EC 2.1.3.2) and dihydroorotase (DHOase; EC 3.5.2.3). The CPSase-function is accomplished in 2 steps, by a glutamine-dependent amidotransferase activity (GATase) that binds and cleaves glutamine to produce ammonia, followed by an ammonium-dependent carbamoyl phosphate synthetase, which reacts with the ammonia, hydrogencarbonate and ATP to form carbamoyl phosphate. The endogenously produced carbamoyl phosphate is sequestered and channeled to the ATCase active site. ATCase then catalyzes the formation of carbamoyl-L-aspartate from L-aspartate and carbamoyl phosphate. In the last step, DHOase catalyzes the cyclization of carbamoyl aspartate to dihydroorotate. This is Multifunctional protein r (r) from Drosophila melanogaster (Fruit fly).